The following is a 229-amino-acid chain: Large ribosomal subunit protein uL1 (229 aa).

It belongs to the universal ribosomal protein uL1 family. Part of the 50S ribosomal subunit.

Binds directly to 23S rRNA. The L1 stalk is quite mobile in the ribosome, and is involved in E site tRNA release. Functionally, protein L1 is also a translational repressor protein, it controls the translation of the L11 operon by binding to its mRNA. The protein is Large ribosomal subunit protein uL1 of Caulobacter vibrioides (strain ATCC 19089 / CIP 103742 / CB 15) (Caulobacter crescentus).